We begin with the raw amino-acid sequence, 91 residues long: Large ribosomal subunit protein uL23c (91 aa).

The protein belongs to the universal ribosomal protein uL23 family. As to quaternary structure, part of the 50S ribosomal subunit.

The protein localises to the plastid. The protein resides in the chloroplast. Its function is as follows. Binds to 23S rRNA. In Picea abies (Norway spruce), this protein is Large ribosomal subunit protein uL23c (rpl23).